The following is a 388-amino-acid chain: LL-diaminopimelate aminotransferase (388 aa).

Substrate-binding residues include Tyr-16 and Gly-41. Pyridoxal 5'-phosphate contacts are provided by residues Tyr-70, 104-105 (SK), Tyr-129, Asn-179, Tyr-210, and 239-241 (SLS). Substrate contacts are provided by Lys-105, Tyr-129, and Asn-179. An N6-(pyridoxal phosphate)lysine modification is found at Lys-242. Arg-250 provides a ligand contact to pyridoxal 5'-phosphate. Position 368 (Arg-368) interacts with substrate.

The protein belongs to the class-I pyridoxal-phosphate-dependent aminotransferase family. LL-diaminopimelate aminotransferase subfamily. Homodimer. Pyridoxal 5'-phosphate serves as cofactor.

It carries out the reaction (2S,6S)-2,6-diaminopimelate + 2-oxoglutarate = (S)-2,3,4,5-tetrahydrodipicolinate + L-glutamate + H2O + H(+). It functions in the pathway amino-acid biosynthesis; L-lysine biosynthesis via DAP pathway; LL-2,6-diaminopimelate from (S)-tetrahydrodipicolinate (aminotransferase route): step 1/1. Its function is as follows. Involved in the synthesis of meso-diaminopimelate (m-DAP or DL-DAP), required for both lysine and peptidoglycan biosynthesis. Catalyzes the direct conversion of tetrahydrodipicolinate to LL-diaminopimelate. The sequence is that of LL-diaminopimelate aminotransferase from Nitratidesulfovibrio vulgaris (strain ATCC 29579 / DSM 644 / CCUG 34227 / NCIMB 8303 / VKM B-1760 / Hildenborough) (Desulfovibrio vulgaris).